A 510-amino-acid chain; its full sequence is NAD(P)H-quinone oxidoreductase subunit 2 B, chloroplastic (510 aa).

The next 13 membrane-spanning stretches (helical) occupy residues 24–44 (LLLFDGSFIFPECILIFGLIL), 57–77 (IPWLYFISSTSLVMSITALLF), 99–119 (IFQFLILLCSTLCIPLSVEYI), 124–144 (MAITEFLLFVLTATLGGMFLC), 149–169 (LITIFVAPECFSLCSYLLSGY), 183–203 (YLLMGGASSSILVHAFSWLYG), 227–247 (PGISIALIFITVGIGFKLSLA), 295–315 (WHLLLEILAILSMIVGNLIAI), 323–343 (MLAYSSIGQIGYVIIGIIVGD), 354–374 (YMLFYISMNLGTFACIVLFGL), 395–415 (ALSLALCLLSLGGLPPLAGFF), 418–438 (LHLFWCGWQAGLYFLVLIGLL), and 482–502 (LSMIVCVIASTIPGISMNPIV).

Belongs to the complex I subunit 2 family. NDH is composed of at least 16 different subunits, 5 of which are encoded in the nucleus.

The protein resides in the plastid. It is found in the chloroplast thylakoid membrane. The catalysed reaction is a plastoquinone + NADH + (n+1) H(+)(in) = a plastoquinol + NAD(+) + n H(+)(out). The enzyme catalyses a plastoquinone + NADPH + (n+1) H(+)(in) = a plastoquinol + NADP(+) + n H(+)(out). In terms of biological role, NDH shuttles electrons from NAD(P)H:plastoquinone, via FMN and iron-sulfur (Fe-S) centers, to quinones in the photosynthetic chain and possibly in a chloroplast respiratory chain. The immediate electron acceptor for the enzyme in this species is believed to be plastoquinone. Couples the redox reaction to proton translocation, and thus conserves the redox energy in a proton gradient. The polypeptide is NAD(P)H-quinone oxidoreductase subunit 2 B, chloroplastic (Manihot esculenta (Cassava)).